Reading from the N-terminus, the 1534-residue chain is Slit homolog 1 protein (1534 aa).

Positions 1–33 (MALTPGWGSSAGPVRPELWLLLWAAAWRLGASA) are cleaved as a signal peptide. In terms of domain architecture, LRRNT spans 34–61 (CPALCTCTGTTVDCHGTGLQAIPKNIPR). 6 LRR repeats span residues 62–83 (NTERLELNGNNITRIHKNDFAG), 86–107 (QLRVLQLMENQIGAVERGAFDD), 110–131 (ELERLRLNRNQLHMLPELLFQN), 134–155 (ALSRLDLSENAIQAIPRKAFRG), 158–179 (DLKNLQLDKNQISCIEEGAFRA), and 182–203 (GLEVLTLNNNNITTIPVSSFNH). Residue N72 is glycosylated (N-linked (GlcNAc...) asparagine). N-linked (GlcNAc...) asparagine glycosylation is present at N192. Positions 215–265 (NHLFCDCHLAWLSQWLRQRPTIGLFTQCSGPASLRGLNVAEVQKSEFSCSG) constitute an LRRCT 1 domain. Residues 273–309 (PTCTLSSGSCPAMCTCSNGIVDCRGKGLTAIPANLPE) form the LRRNT 2 domain. C286 and C295 are joined by a disulfide. LRR repeat units lie at residues 310-331 (TMTEIRLELNGIKSIPPGAFSP), 334-355 (KLRRIDLSNNQIAEIAPDAFQG), 358-379 (SLNSLVLYGNKITDLPRGVFGG), 382-403 (TLQLLLLNANKINCIRPDAFQD), and 406-427 (NLSLLSLYDNKIQSLAKGTFTS). Residue N406 is glycosylated (N-linked (GlcNAc...) asparagine). Residues 439 to 489 (NPFICDCNLKWLADFLRTNPIETSGARCASPRRLANKRIGQIKSKKFRCSA) form the LRRCT 2 domain. 4 cysteine pairs are disulfide-bonded: C443/C466, C445/C487, C513/C519, and C517/C526. In terms of domain architecture, LRRNT 3 spans 504 to 540 (NSECNSDVVCPHKCRCEANVVECSSLKLTKIPERIPQ). LRR repeat units lie at residues 541–562 (STAELRLNNNEISILEATGMFK), 566–587 (HLKKINLSNNKVSEIEDGAFEG), 590–611 (SVSELHLTANQLESIRSGMFRG), 614–635 (GLRTLMLRNNRISCIHNDSFTG), and 638–659 (NVRLLSLYDNQITTVSPGAFDT). N-linked (GlcNAc...) asparagine glycosylation occurs at N571. N630 carries N-linked (GlcNAc...) asparagine glycosylation. Positions 671–721 (NPFNCNCQLAWLGGWLRKRKIVTGNPRCQNPDFLRQIPLQDVAFPDFRCEE) constitute an LRRCT 3 domain. 2 cysteine pairs are disulfide-bonded: C675-C698 and C677-C719. One can recognise an LRRNT 4 domain in the interval 725–761 (EGGCLPRPQCPQECACLDTVVRCSNKHLRALPKGIPK). N762, N801, and N806 each carry an N-linked (GlcNAc...) asparagine glycan. LRR repeat units follow at residues 762–783 (NVTELYLDGNQFTLVPGQLSTF), 785–806 (YLQLVDLSNNKISSLSNSSFTN), 809–830 (QLTTLILSYNALQCIPPLAFQG), and 833–854 (SLRLLSLHGNDISTLQEGIFAD). In terms of domain architecture, LRRCT 4 spans 866–916 (NPLYCDCHLRWLSSWVKTGYKEPGIARCAGPQDMEGKLLLTTPAKKFECQG). EGF-like domains are found at residues 927-962 (DLCLSSPCQNQGTCHNDPLEVYRCACPSGYKGRDCE), 964-1003 (SLDSCSSGPCENGGTCHAQEGEDAPFTCSCPTGFEGPTCG), 1005-1041 (NTDDCVDHACANGGVCVDGVGNYTCQCPLQYEGKACE), 1043-1081 (LVDLCSPDLNPCQHEAQCVGTPDGPRCECMPGYAGDNCS), 1083-1119 (NQDDCRDHRCQNGAQCMDEVNSYSCLCAEGYSGQLCE), and 1127-1163 (PKSPCEGTECQNGANCVDQGNRPVCQCLPGFGGPECE). 18 cysteine pairs are disulfide-bonded: C929/C940, C934/C950, C952/C961, C968/C979, C973/C991, C993/C1002, C1009/C1020, C1014/C1029, C1031/C1040, C1047/C1060, C1054/C1069, C1071/C1080, C1087/C1098, C1092/C1107, C1109/C1118, C1131/C1142, C1136/C1151, and C1153/C1162. N1026 is a glycosylation site (N-linked (GlcNAc...) asparagine). N1079 carries N-linked (GlcNAc...) asparagine glycosylation. In terms of domain architecture, Laminin G-like spans 1166 to 1339 (LSVNFVDRDT…QMKPGVVPGC (174 aa)). N-linked (GlcNAc...) asparagine glycans are attached at residues N1189, N1259, and N1306. Disulfide bonds link C1313–C1339, C1342–C1352, C1347–C1362, C1364–C1373, C1381–C1391, C1386–C1401, C1403–C1412, C1422–C1432, C1427–C1442, C1444–C1453, C1459–C1498, C1477–C1512, C1488–C1528, and C1492–C1530. EGF-like domains follow at residues 1340–1374 (EPCRKLYCLHGICQPNATPGPMCHCEAGWVGLHCD), 1377–1413 (ADGPCHGHKCVHGQCVPLDALSYSCQCQDGYSGALCN), and 1418–1454 (LAEPCRGLQCLHGHCQASGTKGAHCVCDPGFSGELCE). The region spanning 1459-1534 (CRGDPVRDFH…PTKCGCALCA (76 aa)) is the CTCK domain.

Interacts with ROBO1 and GREM1. Predominantly expressed in adult forebrain. Expressed in fetal brain, lung and kidney.

The protein resides in the secreted. Functionally, thought to act as molecular guidance cue in cellular migration, and function appears to be mediated by interaction with roundabout homolog receptors. During neural development involved in axonal navigation at the ventral midline of the neural tube and projection of axons to different regions. SLIT1 and SLIT2 together seem to be essential for midline guidance in the forebrain by acting as repulsive signal preventing inappropriate midline crossing by axons projecting from the olfactory bulb. This Homo sapiens (Human) protein is Slit homolog 1 protein (SLIT1).